The sequence spans 96 residues: Large ribosomal subunit protein eL43 (96 aa).

The C4-type zinc finger occupies 39 to 60; that stretch reads CTFCGKTATKRTCVGIWKCKKC.

The protein belongs to the eukaryotic ribosomal protein eL43 family. In terms of assembly, component of the large ribosomal subunit. Mature ribosomes consist of a small (40S) and a large (60S) subunit. The 40S subunit contains about 32 different proteins and 1 molecule of RNA (18S). The 60S subunit contains about 42 different proteins and 3 molecules of RNA (28S, 5.8S and 5S).

The protein resides in the cytoplasm. In terms of biological role, component of the ribosome, a large ribonucleoprotein complex responsible for the synthesis of proteins in the cell. The small ribosomal subunit (SSU) binds messenger RNAs (mRNAs) and translates the encoded message by selecting cognate aminoacyl-transfer RNA (tRNA) molecules. The large subunit (LSU) contains the ribosomal catalytic site termed the peptidyl transferase center (PTC), which catalyzes the formation of peptide bonds, thereby polymerizing the amino acids delivered by tRNAs into a polypeptide chain. The nascent polypeptides leave the ribosome through a tunnel in the LSU and interact with protein factors that function in enzymatic processing, targeting, and the membrane insertion of nascent chains at the exit of the ribosomal tunnel. The sequence is that of Large ribosomal subunit protein eL43 from Plasmodium falciparum (isolate 3D7).